Here is a 372-residue protein sequence, read N- to C-terminus: tRNA-specific 2-thiouridylase MnmA (372 aa).

Residues 9–16 and M35 each bind ATP; that span reads GMSGGVDS. Positions 95–97 are interaction with target base in tRNA; that stretch reads NPD. The active-site Nucleophile is the C100. C100 and C201 are joined by a disulfide. G124 lines the ATP pocket. An interaction with tRNA region spans residues 151 to 153; it reads KDQ. Residue C201 is the Cysteine persulfide intermediate of the active site. Positions 317-318 are interaction with tRNA; sequence RY.

It belongs to the MnmA/TRMU family.

The protein resides in the cytoplasm. The catalysed reaction is S-sulfanyl-L-cysteinyl-[protein] + uridine(34) in tRNA + AH2 + ATP = 2-thiouridine(34) in tRNA + L-cysteinyl-[protein] + A + AMP + diphosphate + H(+). Catalyzes the 2-thiolation of uridine at the wobble position (U34) of tRNA, leading to the formation of s(2)U34. The sequence is that of tRNA-specific 2-thiouridylase MnmA from Janthinobacterium sp. (strain Marseille) (Minibacterium massiliensis).